The chain runs to 88 residues: Putative membrane protein insertion efficiency factor (88 aa).

It belongs to the UPF0161 family.

It is found in the cell membrane. In terms of biological role, could be involved in insertion of integral membrane proteins into the membrane. The chain is Putative membrane protein insertion efficiency factor from Exiguobacterium sibiricum (strain DSM 17290 / CCUG 55495 / CIP 109462 / JCM 13490 / 255-15).